We begin with the raw amino-acid sequence, 341 residues long: Cell division protein FtsX (341 aa).

Residues 1-34 (MSTTRTPKVSERVAPKPADPQPAKKKRGEDDDGP) are disordered. The Cytoplasmic portion of the chain corresponds to 1 to 65 (MSTTRTPKVS…RRLGKQPIGS (65 aa)). The helical transmembrane segment at 66-86 (FFTCLVMAVALSMPMGLSLLL) threads the bilayer. Over 87–212 (KNIEQLGGSW…LAAILKLGDR (126 aa)) the chain is Periplasmic. Residues 213–233 (FVFGLAVMLISALLLVIGNTI) traverse the membrane as a helical segment. Residues 234 to 263 (RLHIENRRIEIEVIKLVGGTDAYVRRPFLY) lie on the Cytoplasmic side of the membrane. A helical transmembrane segment spans residues 264–284 (MGALYGLGAGLLAWGILAFGL). Residues 285 to 311 (NWLNEAVVGLSGLYGSDFALGGVPASD) lie on the Periplasmic side of the membrane. The chain crosses the membrane as a helical span at residues 312-332 (GLSLLIGAVLLGYIGAWIAVA). Residues 333–341 (RHLNELAPR) are Cytoplasmic-facing.

Belongs to the ABC-4 integral membrane protein family. FtsX subfamily. As to quaternary structure, forms a membrane-associated complex with FtsE.

It is found in the cell inner membrane. Functionally, part of the ABC transporter FtsEX involved in cellular division. In Pseudomonas putida (Arthrobacter siderocapsulatus), this protein is Cell division protein FtsX.